The chain runs to 447 residues: Tubulin alpha-2 chain (447 aa).

Residues Gln-11, Glu-71, Gly-144, Thr-145, Thr-179, Asn-206, and Asn-228 each coordinate GTP. Glu-71 is a Mg(2+) binding site. Residue Glu-254 is part of the active site.

The protein belongs to the tubulin family. Dimer of alpha and beta chains. A typical microtubule is a hollow water-filled tube with an outer diameter of 25 nm and an inner diameter of 15 nM. Alpha-beta heterodimers associate head-to-tail to form protofilaments running lengthwise along the microtubule wall with the beta-tubulin subunit facing the microtubule plus end conferring a structural polarity. Microtubules usually have 13 protofilaments but different protofilament numbers can be found in some organisms and specialized cells. Mg(2+) serves as cofactor. Undergoes a tyrosination/detyrosination cycle, the cyclic removal and re-addition of a C-terminal tyrosine residue by the enzymes tubulin tyrosine carboxypeptidase (TTCP) and tubulin tyrosine ligase (TTL), respectively.

It is found in the cytoplasm. Its subcellular location is the cytoskeleton. The enzyme catalyses GTP + H2O = GDP + phosphate + H(+). Tubulin is the major constituent of microtubules, a cylinder consisting of laterally associated linear protofilaments composed of alpha- and beta-tubulin heterodimers. Microtubules grow by the addition of GTP-tubulin dimers to the microtubule end, where a stabilizing cap forms. Below the cap, tubulin dimers are in GDP-bound state, owing to GTPase activity of alpha-tubulin. This is Tubulin alpha-2 chain (TUBA2) from Eleusine indica (Goosegrass).